The following is a 145-amino-acid chain: Transcription antitermination protein NusB (145 aa).

This sequence belongs to the NusB family.

Functionally, involved in transcription antitermination. Required for transcription of ribosomal RNA (rRNA) genes. Binds specifically to the boxA antiterminator sequence of the ribosomal RNA (rrn) operons. The chain is Transcription antitermination protein NusB from Acetivibrio thermocellus (strain ATCC 27405 / DSM 1237 / JCM 9322 / NBRC 103400 / NCIMB 10682 / NRRL B-4536 / VPI 7372) (Clostridium thermocellum).